The chain runs to 232 residues: Rho-related GTP-binding protein Rho6 (232 aa).

GTP-binding positions include 23–28 (QCGKTA), 38–45 (YPETYVPT), 67–71 (DTSGS), 125–128 (CKTD), and 169–170 (AF). Residues 42 to 50 (YVPTVFENY) carry the Effector region motif. Residue C229 is modified to Cysteine methyl ester. Residue C229 is the site of S-geranylgeranyl cysteine attachment. Residues 230–232 (SIM) constitute a propeptide, removed in mature form.

The protein belongs to the small GTPase superfamily. Rho family. Binds GRB7 and PLXNB1. Interacts with UBXD5. Interacts with PLXNA2. In terms of tissue distribution, mostly expressed in brain and liver.

The protein resides in the cell membrane. Its subcellular location is the cytoplasm. It is found in the cytoskeleton. Lacks intrinsic GTPase activity. Has a low affinity for GDP, and constitutively binds GTP. Controls rearrangements of the actin cytoskeleton. Induces the Rac-dependent neuritic process formation in part by disruption of the cortical actin filaments. Causes the formation of many neuritic processes from the cell body with disruption of the cortical actin filaments. This chain is Rho-related GTP-binding protein Rho6 (RND1), found in Homo sapiens (Human).